Consider the following 85-residue polypeptide: Photosystem I reaction center subunit PsaK (85 aa).

2 consecutive transmembrane segments (helical) span residues 13-33 (VSWTPKVALVMIICNVIAIAI) and 59-79 (GAMLGCTSFGHLLGMGAILGL).

The protein belongs to the PsaG/PsaK family.

The protein localises to the cellular thylakoid membrane. This Synechococcus sp. (strain WH7803) protein is Photosystem I reaction center subunit PsaK.